The sequence spans 253 residues: MICOS complex subunit mic25-b (253 aa).

Residue glycine 2 is the site of N-myristoyl glycine attachment. Positions 38 to 82 (KDQSTWAASGAASGSATVPSKVGSSASHPAAASKDGAHKPTAAGV) are disordered. A compositionally biased stretch (low complexity) spans 44–53 (AASGAASGSA). Residues 87-116 (AEEDLYRRYEREQTLIQEELARLAKREKDA) adopt a coiled-coil conformation. The CHCH domain occupies 206 to 248 (DPVCMDLQSNILKCYAENKQERLNCSDLAKEYQKCVSAAQKNL). Short sequence motifs (cx9C motif) lie at residues 209-219 (CMDLQSNILKC) and 230-240 (CSDLAKEYQKC). 2 disulfides stabilise this stretch: cysteine 209–cysteine 240 and cysteine 219–cysteine 230.

This sequence belongs to the MICOS complex subunit Mic19 family. Metazoan Mic25 subfamily. In terms of assembly, component of the mitochondrial contact site and cristae organizing system (MICOS) complex (also known as MINOS or MitOS complex).

Its subcellular location is the mitochondrion inner membrane. Functionally, component of the MICOS complex, a large protein complex of the mitochondrial inner membrane that plays crucial roles in the maintenance of crista junctions, inner membrane architecture, and formation of contact sites to the outer membrane. The sequence is that of MICOS complex subunit mic25-b (chchd6-b) from Xenopus laevis (African clawed frog).